The primary structure comprises 450 residues: ATP-dependent protease ATPase subunit HslU (450 aa).

ATP contacts are provided by residues V29, 71-76 (GVGKTE), D261, E328, and R400.

This sequence belongs to the ClpX chaperone family. HslU subfamily. As to quaternary structure, a double ring-shaped homohexamer of HslV is capped on each side by a ring-shaped HslU homohexamer. The assembly of the HslU/HslV complex is dependent on binding of ATP.

It localises to the cytoplasm. Functionally, ATPase subunit of a proteasome-like degradation complex; this subunit has chaperone activity. The binding of ATP and its subsequent hydrolysis by HslU are essential for unfolding of protein substrates subsequently hydrolyzed by HslV. HslU recognizes the N-terminal part of its protein substrates and unfolds these before they are guided to HslV for hydrolysis. The protein is ATP-dependent protease ATPase subunit HslU of Rickettsia prowazekii (strain Madrid E).